Consider the following 1037-residue polypeptide: Ras guanine nucleotide exchange factor E (1037 aa).

Residues 5 to 35 are a coiled coil; it reads ECNNRIEYLQNKVLELESLNENLKGQLEYFQ. 8 disordered regions span residues 65 to 100, 114 to 150, 166 to 387, 414 to 437, 451 to 472, 602 to 628, 907 to 935, and 1004 to 1037; these read NNNN…TTNN, TNSN…ELSN, TTTT…PLSN, TVNM…LYHS, SSLS…LTNP, INSN…NQLE, NTTT…QQLN, and EKET…SFKS. 2 stretches are compositionally biased toward low complexity: residues 114–145 and 166–200; these read TNSN…NNSN and TTTT…NNNN. Over residues 229 to 239 the composition is skewed to polar residues; that stretch reads PTSSRNSPTNK. Residues 240 to 276 show a composition bias toward low complexity; that stretch reads SSPQFLSPLSKSPLSQSTQSTTVSSPSPSWTTTVPQS. Positions 282–300 are enriched in polar residues; sequence TIVQSKSPYSPDTNISNKL. Low complexity predominate over residues 318 to 360; sequence SPSKNSPRSLNSNNNNSSATTSITTPPTTSTPTPTTSTTTTTT. Positions 361–370 are enriched in basic and acidic residues; the sequence is TERRPEDRRS. Polar residues-rich tracts occupy residues 372 to 387 and 424 to 437; these read TSPF…PLSN and PRSN…LYHS. Positions 496 to 694 constitute an N-terminal Ras-GEF domain; that stretch reads NGFIVKGGTI…NLKRLLTNDR (199 aa). In terms of domain architecture, Ras-GEF spans 726–1003; it reads DPTEIARQLT…YKLSLICEPK (278 aa). A compositionally biased stretch (low complexity) spans 907 to 930; it reads NTTTTTTTTTTTTTTNTTTSNNNN. Residues 1027–1037 are compositionally biased toward polar residues; that stretch reads SVTSLLNSFKS.

Functionally, promotes the exchange of Ras-bound GDP by GTP. Seems to play a role in chemotaxis. The chain is Ras guanine nucleotide exchange factor E (gefE) from Dictyostelium discoideum (Social amoeba).